Reading from the N-terminus, the 248-residue chain is tRNA (guanine-N(1)-)-methyltransferase (248 aa).

Residues Gly113 and 133-138 (IGDFVL) contribute to the S-adenosyl-L-methionine site.

The protein belongs to the RNA methyltransferase TrmD family. As to quaternary structure, homodimer.

Its subcellular location is the cytoplasm. It catalyses the reaction guanosine(37) in tRNA + S-adenosyl-L-methionine = N(1)-methylguanosine(37) in tRNA + S-adenosyl-L-homocysteine + H(+). In terms of biological role, specifically methylates guanosine-37 in various tRNAs. The polypeptide is tRNA (guanine-N(1)-)-methyltransferase (Dehalococcoides mccartyi (strain ATCC BAA-2266 / KCTC 15142 / 195) (Dehalococcoides ethenogenes (strain 195))).